The sequence spans 339 residues: MIGKIETLWDEIDNLNVNNSKELETLRIRFLGKKGEIASLMSGFRNVEANQKREIGQKLNSLKVKIQTKIDQLKETLGCQDLSENLIDLTRTAYPYRVGTRHPISIVQKRICNIFFKLGFSIAEGPEIEDDWHVFSALNFAFDHPARDMQDTFFIKYDKNILLRTHTSSVQIRTMEKTQPPIRILCPGRVYRNEAISARAHCFFHQVEAFYINRNVSFADLRQVLVFFAKEMFDSGINTRLRPSFFPFTEPSAEMDIMCNLCRGKGCSFCKFTGWVEILGCGMIDPNVLDNCNIDSKTYSGYALGMGVERITSLKYQVKDLRLFSENDIRFLRQFEMAV.

Glutamate 250 contributes to the Mg(2+) binding site.

Belongs to the class-II aminoacyl-tRNA synthetase family. Phe-tRNA synthetase alpha subunit type 1 subfamily. Tetramer of two alpha and two beta subunits. The cofactor is Mg(2+).

The protein resides in the cytoplasm. The enzyme catalyses tRNA(Phe) + L-phenylalanine + ATP = L-phenylalanyl-tRNA(Phe) + AMP + diphosphate + H(+). This is Phenylalanine--tRNA ligase alpha subunit from Azobacteroides pseudotrichonymphae genomovar. CFP2.